The primary structure comprises 168 residues: MAKKSIKVVVEGGNVKPGPPLAPTLSQLGLNVGEVVKKINEATSQFKGMTVPVTLDVDTDTKKYEVSVGVPTTTSLLVKKAGASGPSGDPEHKKIGNISMDDVIEVAISKKPSLTAKELKGAVKSILGTAKSIGLTVDNKDPKLVVREVEEGKYDDKIKEMEEKWSSG.

This sequence belongs to the universal ribosomal protein uL11 family. In terms of assembly, part of the ribosomal stalk of the 50S ribosomal subunit. Interacts with L10 and the large rRNA to form the base of the stalk. L10 forms an elongated spine to which L12 dimers bind in a sequential fashion forming a multimeric L10(L12)X complex.

Its function is as follows. Forms part of the ribosomal stalk which helps the ribosome interact with GTP-bound translation factors. This chain is Large ribosomal subunit protein uL11, found in Metallosphaera sedula (strain ATCC 51363 / DSM 5348 / JCM 9185 / NBRC 15509 / TH2).